Reading from the N-terminus, the 475-residue chain is MRNFTKQYINGEWVDSASGETIDVINPATEEVMGKIAKGNEEDVNKAVDAADKVYLEFRHSSVEERRELLDKIVKEYQNRKNDLIEAITDELGAPLSVSENVHYQMGLNHFTAARDALDSFQFEEQRGDDLVVKEAIGVAGLVTPWNFPTNQTSLKLAAAFAAGSPVVLKPSEETPFAAIILAEIFDKVGVPKGVFNLVNGDGSGVGNPLSEHPKVRMMSFTGSGPTGSKIMEKAAKDFKKVSLELGGKSPYIVLDDVDVEEAANATTKKVVNNTGQVCTAGTRVLIPESIKEDYLTAVKEAFSKVKVGQPREEGTQVGPIISKKQFDQVQDYIDKGINEGAELFYGGPGKPEGLDKGYFARPTIFINVDNHMTIAQEEIFGPVMSVITYNNLDEAIEIANDTKYGLAGYVIGKDKDTLRHVARSIEAGTIEINEAGRKPDLPFGGYKESGLGREWGDYGIEEFLEVKSIAGYFK.

201 to 207 (GDGSGVG) serves as a coordination point for NAD(+). Catalysis depends on residues glutamate 245 and cysteine 279.

This sequence belongs to the aldehyde dehydrogenase family.

The catalysed reaction is an aldehyde + NAD(+) + H2O = a carboxylate + NADH + 2 H(+). The sequence is that of Putative aldehyde dehydrogenase SERP1729 from Staphylococcus epidermidis (strain ATCC 35984 / DSM 28319 / BCRC 17069 / CCUG 31568 / BM 3577 / RP62A).